The following is a 334-amino-acid chain: tRNA N6-adenosine threonylcarbamoyltransferase (334 aa).

Fe cation is bound by residues histidine 111 and histidine 115. Substrate-binding positions include 134–138 (IVSGG), aspartate 167, glycine 180, aspartate 184, and asparagine 272. Aspartate 300 contributes to the Fe cation binding site.

This sequence belongs to the KAE1 / TsaD family. The cofactor is Fe(2+).

It localises to the cytoplasm. The catalysed reaction is L-threonylcarbamoyladenylate + adenosine(37) in tRNA = N(6)-L-threonylcarbamoyladenosine(37) in tRNA + AMP + H(+). Functionally, required for the formation of a threonylcarbamoyl group on adenosine at position 37 (t(6)A37) in tRNAs that read codons beginning with adenine. Is involved in the transfer of the threonylcarbamoyl moiety of threonylcarbamoyl-AMP (TC-AMP) to the N6 group of A37, together with TsaE and TsaB. TsaD likely plays a direct catalytic role in this reaction. This Dictyoglomus turgidum (strain DSM 6724 / Z-1310) protein is tRNA N6-adenosine threonylcarbamoyltransferase.